Reading from the N-terminus, the 206-residue chain is Large ribosomal subunit protein mL62 (206 aa).

A mitochondrion-targeting transit peptide spans 1–29; sequence MATAWCLPWTLRRAGAWLLTPPLRCPRRA.

It belongs to the prokaryotic/mitochondrial release factor family. Mitochondrion-specific ribosomal protein mL62 subfamily. Component of the mitochondrial 39S ribosomal subunit.

The protein localises to the mitochondrion. It catalyses the reaction an N-acyl-L-alpha-aminoacyl-tRNA + H2O = an N-acyl-L-amino acid + a tRNA + H(+). In terms of biological role, essential peptidyl-tRNA hydrolase component of the mitochondrial large ribosomal subunit. Acts as a codon-independent translation release factor that has lost all stop codon specificity and directs the termination of translation in mitochondrion, possibly in case of abortive elongation. May be involved in the hydrolysis of peptidyl-tRNAs that have been prematurely terminated and thus in the recycling of stalled mitochondrial ribosomes. The chain is Large ribosomal subunit protein mL62 from Ailuropoda melanoleuca (Giant panda).